Here is a 441-residue protein sequence, read N- to C-terminus: UDP-N-acetylglucosamine 1-carboxyvinyltransferase 1 (441 aa).

A phosphoenolpyruvate-binding site is contributed by Lys42 to Asn43. Position 117 (Arg117) interacts with UDP-N-acetyl-alpha-D-glucosamine. The active-site Proton donor is Cys141. 2-(S-cysteinyl)pyruvic acid O-phosphothioketal is present on Cys141. UDP-N-acetyl-alpha-D-glucosamine-binding residues include Asp330 and Ile352.

Belongs to the EPSP synthase family. MurA subfamily.

The protein localises to the cytoplasm. It carries out the reaction phosphoenolpyruvate + UDP-N-acetyl-alpha-D-glucosamine = UDP-N-acetyl-3-O-(1-carboxyvinyl)-alpha-D-glucosamine + phosphate. The protein operates within cell wall biogenesis; peptidoglycan biosynthesis. In terms of biological role, cell wall formation. Adds enolpyruvyl to UDP-N-acetylglucosamine. This is UDP-N-acetylglucosamine 1-carboxyvinyltransferase 1 from Symbiobacterium thermophilum (strain DSM 24528 / JCM 14929 / IAM 14863 / T).